Reading from the N-terminus, the 339-residue chain is Pyrimidine monooxygenase RutA (339 aa).

FMN contacts are provided by residues 26-27, Asn-92, Glu-101, 117-118, and Ser-167; these read IK and RY.

It belongs to the NtaA/SnaA/DszA monooxygenase family. RutA subfamily.

It catalyses the reaction uracil + FMNH2 + NADH + O2 = (Z)-3-ureidoacrylate + FMN + NAD(+) + H2O + H(+). It carries out the reaction thymine + FMNH2 + NADH + O2 = (Z)-2-methylureidoacrylate + FMN + NAD(+) + H2O + H(+). Catalyzes the pyrimidine ring opening between N-3 and C-4 by an unusual flavin hydroperoxide-catalyzed mechanism, adding oxygen atoms in the process to yield ureidoacrylate peracid, that immediately reacts with FMN forming ureidoacrylate and FMN-N(5)-oxide. The FMN-N(5)-oxide reacts spontaneously with NADH to produce FMN. Requires the flavin reductase RutF to regenerate FMN in vivo. The polypeptide is Pyrimidine monooxygenase RutA (Cronobacter sakazakii (strain ATCC BAA-894) (Enterobacter sakazakii)).